A 149-amino-acid chain; its full sequence is Putative oligosaccharyltransferase complex subunit CG9662 (149 aa).

Residues Met1–Ala32 are Cytoplasmic-facing. A helical transmembrane segment spans residues Val33 to Ile53. Topologically, residues Val54–Tyr83 are extracellular. The chain crosses the membrane as a helical span at residues Ile84–Met104. Residues Asp105–Arg117 are Cytoplasmic-facing. Residues Leu118 to Phe138 traverse the membrane as a helical segment. The Extracellular segment spans residues Met139 to Pro149.

Belongs to the OSTC family. As to quaternary structure, component of the oligosaccharyltransferase (OST) complex.

It localises to the membrane. Functionally, subunit of the oligosaccharyl transferase (OST) complex that catalyzes the initial transfer of a defined glycan (Glc(3)Man(9)GlcNAc(2) in eukaryotes) from the lipid carrier dolichol-pyrophosphate to an asparagine residue within an Asn-X-Ser/Thr consensus motif in nascent polypeptide chains, the first step in protein N-glycosylation. N-glycosylation occurs cotranslationally and the complex associates with the Sec61 complex at the channel-forming translocon complex that mediates protein translocation across the endoplasmic reticulum (ER). All subunits are required for a maximal enzyme activity. The chain is Putative oligosaccharyltransferase complex subunit CG9662 from Drosophila melanogaster (Fruit fly).